The primary structure comprises 320 residues: Cytochrome f (320 aa).

The N-terminal stretch at 1 to 35 (MENRNTFSWVKEQMTRSISVSIMIYVITRTSISNA) is a signal peptide. Heme is bound by residues tyrosine 36, cysteine 56, cysteine 59, and histidine 60. Residues 286–306 (VQGLLFFFASVILAQVFLVLK) form a helical membrane-spanning segment.

It belongs to the cytochrome f family. The 4 large subunits of the cytochrome b6-f complex are cytochrome b6, subunit IV (17 kDa polypeptide, petD), cytochrome f and the Rieske protein, while the 4 small subunits are PetG, PetL, PetM and PetN. The complex functions as a dimer. Heme is required as a cofactor.

It localises to the plastid. It is found in the chloroplast thylakoid membrane. Its function is as follows. Component of the cytochrome b6-f complex, which mediates electron transfer between photosystem II (PSII) and photosystem I (PSI), cyclic electron flow around PSI, and state transitions. The sequence is that of Cytochrome f from Oryza nivara (Indian wild rice).